Reading from the N-terminus, the 340-residue chain is Large ribosomal subunit protein uL10 (340 aa).

The interval 305–340 (APQPAEEKVEEAEEEEEEEEEASEEEALAGLGALFG) is disordered. The span at 312–331 (KVEEAEEEEEEEEEASEEEA) shows a compositional bias: acidic residues.

The protein belongs to the universal ribosomal protein uL10 family. In terms of assembly, part of the 50S ribosomal subunit. Forms part of the ribosomal stalk which helps the ribosome interact with GTP-bound translation factors. Forms a heptameric L10(L12)2(L12)2(L12)2 complex, where L10 forms an elongated spine to which the L12 dimers bind in a sequential fashion.

In terms of biological role, forms part of the ribosomal stalk, playing a central role in the interaction of the ribosome with GTP-bound translation factors. The sequence is that of Large ribosomal subunit protein uL10 from Thermococcus gammatolerans (strain DSM 15229 / JCM 11827 / EJ3).